The chain runs to 353 residues: Photosystem II protein D1 (353 aa).

An N-acetylthreonine modification is found at T2. At T2 the chain carries Phosphothreonine. 3 helical membrane-spanning segments follow: residues 29–46 (YIGWFGVLMIPTLLTATS), 118–133 (HFLLGVACYMGREWEL), and 142–156 (WIAVAYSAPVAAATA). Position 118 (H118) interacts with chlorophyll a. A pheophytin a-binding site is contributed by Y126. D170 and E189 together coordinate [CaMn4O5] cluster. Residues 197 to 218 (FHMLGVAGVFGGSLFSAMHGSL) traverse the membrane as a helical segment. Residue H198 participates in chlorophyll a binding. A quinone contacts are provided by residues H215 and 264–265 (SF). H215 is a binding site for Fe cation. Residue H272 coordinates Fe cation. Residues 274-288 (FLAAWPVVGIWFTAL) form a helical membrane-spanning segment. 4 residues coordinate [CaMn4O5] cluster: H332, E333, D342, and A344. Residues 345 to 353 (AMEAPSVNG) constitute a propeptide that is removed on maturation.

Belongs to the reaction center PufL/M/PsbA/D family. PSII is composed of 1 copy each of membrane proteins PsbA, PsbB, PsbC, PsbD, PsbE, PsbF, PsbH, PsbI, PsbJ, PsbK, PsbL, PsbM, PsbT, PsbX, PsbY, PsbZ, Psb30/Ycf12, at least 3 peripheral proteins of the oxygen-evolving complex and a large number of cofactors. It forms dimeric complexes. The D1/D2 heterodimer binds P680, chlorophylls that are the primary electron donor of PSII, and subsequent electron acceptors. It shares a non-heme iron and each subunit binds pheophytin, quinone, additional chlorophylls, carotenoids and lipids. D1 provides most of the ligands for the Mn4-Ca-O5 cluster of the oxygen-evolving complex (OEC). There is also a Cl(-1) ion associated with D1 and D2, which is required for oxygen evolution. The PSII complex binds additional chlorophylls, carotenoids and specific lipids. is required as a cofactor. In terms of processing, tyr-161 forms a radical intermediate that is referred to as redox-active TyrZ, YZ or Y-Z. Post-translationally, C-terminally processed by CTPA; processing is essential to allow assembly of the oxygen-evolving complex and thus photosynthetic growth.

Its subcellular location is the plastid. It is found in the chloroplast thylakoid membrane. It catalyses the reaction 2 a plastoquinone + 4 hnu + 2 H2O = 2 a plastoquinol + O2. In terms of biological role, photosystem II (PSII) is a light-driven water:plastoquinone oxidoreductase that uses light energy to abstract electrons from H(2)O, generating O(2) and a proton gradient subsequently used for ATP formation. It consists of a core antenna complex that captures photons, and an electron transfer chain that converts photonic excitation into a charge separation. The D1/D2 (PsbA/PsbD) reaction center heterodimer binds P680, the primary electron donor of PSII as well as several subsequent electron acceptors. This chain is Photosystem II protein D1, found in Phaseolus vulgaris (Kidney bean).